The sequence spans 106 residues: Cell division protein FtsB (106 aa).

Over 1–3 (MGK) the chain is Cytoplasmic. A helical membrane pass occupies residues 4-21 (LTLLLLVLLGWLQYSLWL). Residues 22–106 (GKNGIHDFVR…GTPSTQNNAQ (85 aa)) are Periplasmic-facing. A coiled-coil region spans residues 31–62 (RVKEDVAAQEANNSTLKARNDQLFAEIDDLNG).

It belongs to the FtsB family. Part of a complex composed of FtsB, FtsL and FtsQ.

The protein resides in the cell inner membrane. Essential cell division protein. May link together the upstream cell division proteins, which are predominantly cytoplasmic, with the downstream cell division proteins, which are predominantly periplasmic. The polypeptide is Cell division protein FtsB (Yersinia pseudotuberculosis serotype O:1b (strain IP 31758)).